The following is a 397-amino-acid chain: Presenilin-like protein At2g29900 (397 aa).

Over 1 to 17 the chain is Cytoplasmic; it reads MDRNQRPRSILDSLGEE. Residues 18–38 form a helical membrane-spanning segment; that stretch reads LIAILTPVSICMFTVVLLVCI. Residues 39–76 are Lumenal-facing; that stretch reads LNSDPSSSSASFSSIATAAYSESDSDSSWDKFVGALLN. A helical transmembrane segment spans residues 77–97; sequence SVVFVAAITVATFVLVLLFYL. The Cytoplasmic segment spans residues 98-106; sequence RCVKFLKFY. A helical membrane pass occupies residues 107 to 127; the sequence is MGFSAFIVLGNLGGEILVLLI. Residues 128–135 lie on the Lumenal side of the membrane; that stretch reads DRFRFPID. Residues 136–156 traverse the membrane as a helical segment; it reads SITFLILLFNFSVVGVFAVFM. The Cytoplasmic segment spans residues 157-158; that stretch reads SK. Residues 159-179 form a helical membrane-spanning segment; sequence FSILITQGYLVWIGVLVAYFF. Topologically, residues 180-188 are lumenal; it reads TLLPEWTTW. The helical transmembrane segment at 189–209 threads the bilayer; sequence VLLVALALYDIAAVLLPVGPL. D198 is a catalytic residue. Topologically, residues 210–305 are cytoplasmic; that stretch reads RLLVEMAISR…NSETFLEGIG (96 aa). Residues 306-326 traverse the membrane as a helical segment; the sequence is LGSSGAIKLGLGDFIFYSVLV. The active site involves D318. Residues 327 to 336 are Lumenal-facing; the sequence is GRAAMYDLMT. The helical transmembrane segment at 337–357 threads the bilayer; the sequence is VYACYLAIIAGLGITLMLLSV. At 358-366 the chain is on the cytoplasmic side; sequence YQKALPALP. The PAL motif lies at 363 to 365; sequence PAL. An intramembrane region (helical) is located at residues 367 to 387; it reads VSIMLGVVFYFLARLLLEVFV. Residues 388 to 397 are Cytoplasmic-facing; the sequence is VQCSSNLVMF.

It belongs to the peptidase A22A family. In terms of assembly, homodimer. Probable component of the gamma-secretase complex, a complex composed of a presenilin homodimer, nicastrin, APH1 and PEN2.

The protein resides in the endoplasmic reticulum membrane. The protein localises to the golgi apparatus membrane. Probable subunit of the gamma-secretase complex, an endoprotease complex that catalyzes the intramembrane cleavage of integral membrane proteins such as Notch receptors. The chain is Presenilin-like protein At2g29900 from Arabidopsis thaliana (Mouse-ear cress).